The chain runs to 73 residues: Large ribosomal subunit protein bL31 (73 aa).

4 residues coordinate Zn(2+): Cys16, Cys18, Cys36, and Cys39.

Belongs to the bacterial ribosomal protein bL31 family. Type A subfamily. Part of the 50S ribosomal subunit. Zn(2+) is required as a cofactor.

Binds the 23S rRNA. This is Large ribosomal subunit protein bL31 from Desulfosudis oleivorans (strain DSM 6200 / JCM 39069 / Hxd3) (Desulfococcus oleovorans).